The following is a 73-amino-acid chain: Exodeoxyribonuclease 7 small subunit (73 aa).

The protein belongs to the XseB family. As to quaternary structure, heterooligomer composed of large and small subunits.

It is found in the cytoplasm. The enzyme catalyses Exonucleolytic cleavage in either 5'- to 3'- or 3'- to 5'-direction to yield nucleoside 5'-phosphates.. Bidirectionally degrades single-stranded DNA into large acid-insoluble oligonucleotides, which are then degraded further into small acid-soluble oligonucleotides. This chain is Exodeoxyribonuclease 7 small subunit, found in Clostridium novyi (strain NT).